We begin with the raw amino-acid sequence, 789 residues long: Larval serum protein 1 beta chain (789 aa).

The N-terminal stretch at 1–16 (MKIAIALLACLGLAAA) is a signal peptide.

The protein belongs to the hemocyanin family. As to quaternary structure, heterohexamer, composed of three subunits, alpha, beta and gamma. Larval hemolymph.

Its subcellular location is the secreted. It is found in the extracellular space. In terms of biological role, larval storage protein (LSP) which may serve as a store of amino acids for synthesis of adult proteins. This Drosophila melanogaster (Fruit fly) protein is Larval serum protein 1 beta chain (Lsp1beta).